Consider the following 581-residue polypeptide: MPLNSLHNLERKPSKAWSTSCTAPAARLQASFSLQQEEPRQIRRSGDYQPSLWDFNYIQSLNTPYKEQRYVNRQAELIMQVRMLLKVKMEAIQQLELIDDLQYLGLSYFFPDEIKQILSSIHNEHRYFHNNDLYLTALGFRILRQHGFNVSEDVFDCFKTEKCSDFNANLAQDTKGMLQLYEASFLLREGEDTLELARRFSTRSLREKLDEDGDEIDEDLSSWIRHSLDLPLHWRIQGLEARWFLDAYARRPDMNPLIFKLAKLNFNIVQATYQEELKDVSRWWNSSCLAEKLPFVRDRIVECFFWAIGAFEPHQYSYQRKMAAIIITFVTIIDDVYDVYGTLEELELFTDMIRRWDNISISQLPYYMQVCYLALYNFVSERAYDILKDQHFNSIPYLQRSWVSLVEGYLKEAYWYYNGYKPSLEEYLNNAKISISAPTIISQLYFTLANSTDETVIESLYEYHNILYLSGTILRLADDLGTSQHELERGDVPKAIQCYMKDTNASEREAVEHVKFLIRETWKEMNTVTTASDCPFTDDLVAVATNLARAAQFIYLDGDGHGVQHSEIHQQMGGLLFQPYV.

The transit peptide at 1–28 (MPLNSLHNLERKPSKAWSTSCTAPAARL) directs the protein to the chloroplast. The (2E)-geranyl diphosphate site is built by arginine 297, aspartate 334, aspartate 338, arginine 475, and aspartate 478. Aspartate 334 and aspartate 338 together coordinate Mg(2+). The short motif at 334-338 (DDVYD) is the DDXXD motif element. Mg(2+) contacts are provided by aspartate 478, threonine 482, and glutamate 486.

Belongs to the terpene synthase family. Tpsb subfamily. Mg(2+) serves as cofactor. It depends on Mn(2+) as a cofactor.

Its subcellular location is the plastid. It localises to the chloroplast. The catalysed reaction is (2E)-geranyl diphosphate = sabinene + diphosphate. It catalyses the reaction (2E)-geranyl diphosphate = beta-myrcene + diphosphate. It participates in secondary metabolite biosynthesis; terpenoid biosynthesis. In terms of biological role, monoterpene synthase (TPS) involved in the biosynthesis of monoterpene natural products, components of the chemical defense arsenal. Catalyzes the conversion of (2E)-geranyl diphosphate (GPP) into sabinene, and, as minor products, myrcene. This chain is Sabinene synthase 1, chloroplastic, found in Salvia pomifera (Apple sage).